Consider the following 426-residue polypeptide: Protein arginine methyltransferase NDUFAF7 homolog, mitochondrial (426 aa).

The protein belongs to the NDUFAF7 family.

The protein localises to the mitochondrion. The enzyme catalyses L-arginyl-[protein] + 2 S-adenosyl-L-methionine = N(omega),N(omega)'-dimethyl-L-arginyl-[protein] + 2 S-adenosyl-L-homocysteine + 2 H(+). Arginine methyltransferase involved in the assembly or stability of mitochondrial NADH:ubiquinone oxidoreductase complex (complex I). This is Protein arginine methyltransferase NDUFAF7 homolog, mitochondrial from Caenorhabditis elegans.